Here is a 550-residue protein sequence, read N- to C-terminus: Efflux pump DEP3 (550 aa).

Positions 1–33 are disordered; the sequence is MSEQSTLAGPYTEKPGVESQNPTGDGKASFDET. 11 consecutive transmembrane segments (helical) span residues 44-64, 78-98, 109-129, 139-159, 172-192, 199-219, 242-262, 268-288, 319-339, 351-371, and 373-393; these read AIAY…NTIV, LELI…ILLW, WVYI…GAAP, VIAG…VSVL, STVV…AFAA, WGFY…MILF, AVIF…GGVV, GTII…IVLL, FLAS…FQFI, LLPL…LMPK, and GLIP…SALM. N-linked (GlcNAc...) asparagine glycosylation is present at asparagine 399. 3 consecutive transmembrane segments (helical) span residues 410–430, 439–459, and 515–535; these read ILVG…VQSL, AVGA…AICG, and SIWA…WPLF.

This sequence belongs to the major facilitator superfamily. TCR/Tet family.

The protein localises to the cell membrane. Its function is as follows. Efflux pump; part of the gene cluster that mediates the biosynthesis of depudecin, a highly oxidized eleven-carbon linear polyketide that acts as a histone deacetylase (HDAC) inhibitor and makes a small contribution to pathogenesis. Is presumed either to be responsible for exporting depudecin, to provide self-protection, or both. The chain is Efflux pump DEP3 from Fusarium langsethiae.